Consider the following 581-residue polypeptide: Probable peptidoglycan D,D-transpeptidase PenA (581 aa).

Residues 28–48 (ISFVLMAMAVLFACLIARGLY) form a helical membrane-spanning segment. S310 (acyl-ester intermediate) is an active-site residue.

This sequence belongs to the transpeptidase family. FtsI subfamily.

Its subcellular location is the cell inner membrane. The catalysed reaction is Preferential cleavage: (Ac)2-L-Lys-D-Ala-|-D-Ala. Also transpeptidation of peptidyl-alanyl moieties that are N-acyl substituents of D-alanine.. It participates in cell wall biogenesis; peptidoglycan biosynthesis. In terms of biological role, catalyzes cross-linking of the peptidoglycan cell wall at the division septum. The sequence is that of Probable peptidoglycan D,D-transpeptidase PenA from Neisseria gonorrhoeae.